The following is a 405-amino-acid chain: Tryptophan synthase beta chain (405 aa).

Lys-95 bears the N6-(pyridoxal phosphate)lysine mark.

The protein belongs to the TrpB family. As to quaternary structure, tetramer of two alpha and two beta chains. Pyridoxal 5'-phosphate serves as cofactor.

The enzyme catalyses (1S,2R)-1-C-(indol-3-yl)glycerol 3-phosphate + L-serine = D-glyceraldehyde 3-phosphate + L-tryptophan + H2O. It functions in the pathway amino-acid biosynthesis; L-tryptophan biosynthesis; L-tryptophan from chorismate: step 5/5. Functionally, the beta subunit is responsible for the synthesis of L-tryptophan from indole and L-serine. The polypeptide is Tryptophan synthase beta chain (Pseudomonas putida (strain ATCC 47054 / DSM 6125 / CFBP 8728 / NCIMB 11950 / KT2440)).